We begin with the raw amino-acid sequence, 135 residues long: Large ribosomal subunit protein bL17 (135 aa).

Belongs to the bacterial ribosomal protein bL17 family. Part of the 50S ribosomal subunit. Contacts protein L32.

The chain is Large ribosomal subunit protein bL17 from Listeria innocua serovar 6a (strain ATCC BAA-680 / CLIP 11262).